The sequence spans 177 residues: DELTA-stichotoxin-Hcr4b (177 aa).

A plays an important role in the hemolytic activity region spans residues 3 to 12 (ALAGTITLGA). Residues 11–30 (GASLGFQILDKVLGELGKVS) form an N-terminal region region. Residues Ser54, Val87, Ser105, Pro107, Tyr133, Tyr137, and Tyr138 each contribute to the phosphocholine site. Positions 105-120 (SVPFDYNLYSNWWDVK) are trp-rich region, which is important for the binding to lipid membrane.

The protein belongs to the actinoporin family. Sea anemone subfamily. In terms of assembly, octamer or nonamer in membranes. Monomer in the soluble state.

Its subcellular location is the secreted. It localises to the nematocyst. The protein resides in the target cell membrane. Functionally, pore-forming protein that forms cations-selective hydrophilic pores of around 1 nm and causes cardiac stimulation and cytolysis. Pore formation is a multi-step process that involves specific recognition of membrane sphingomyelin (but neither cholesterol nor phosphatidylcholine) using aromatic rich region and adjacent phosphocholine (POC) binding site, firm binding to the membrane (mainly driven by hydrophobic interactions) accompanied by the transfer of the N-terminal region to the lipid-water interface and finally pore formation after oligomerization of monomers. Cytolytic effects include red blood cells hemolysis, platelet aggregation and lysis, cytotoxic and cytostatic effects on fibroblasts. Lethality in mammals has been ascribed to severe vasospasm of coronary vessels, cardiac arrhythmia, and inotropic effects. Preincubation with exogenous sphingomyeline causes complete loss of hemolytic activity. This chain is DELTA-stichotoxin-Hcr4b, found in Radianthus crispa (Leathery sea anemone).